Here is a 561-residue protein sequence, read N- to C-terminus: Probable oligo-1,6-glucosidase 2 (561 aa).

The active-site Nucleophile is the D199. E255 acts as the Proton donor in catalysis.

Belongs to the glycosyl hydrolase 13 family.

The protein localises to the cytoplasm. It carries out the reaction Hydrolysis of (1-&gt;6)-alpha-D-glucosidic linkages in some oligosaccharides produced from starch and glycogen by alpha-amylase, and in isomaltose.. The polypeptide is Probable oligo-1,6-glucosidase 2 (ycdG) (Bacillus subtilis (strain 168)).